The sequence spans 1165 residues: Chitin synthase 3 (1165 aa).

At 1–170 (MTGLNGDDPD…ETNDTLSFWQ (170 aa)) the chain is on the cytoplasmic side. Disordered regions lie at residues 19–53 (DEES…NNPD) and 74–97 (PSST…GSVR). Residues 74–92 (PSSTGVNPNATRRSGSLRS) show a composition bias toward polar residues. Residue lysine 136 forms a Glycyl lysine isopeptide (Lys-Gly) (interchain with G-Cter in ubiquitin) linkage. Residues 171-191 (MYCYFITFWAPAPILAFCGMP) traverse the membrane as a helical segment. Residues 192 to 340 (KKERQMAWRE…PNFTVENYAG (149 aa)) lie on the Extracellular side of the membrane. 2 N-linked (GlcNAc...) asparagine glycosylation sites follow: asparagine 303 and asparagine 332. The chain crosses the membrane as a helical span at residues 341–354 (WNCHTSKEDRDAFY). Residues 355-452 (GLKSKADVYF…SKTVGCIASD (98 aa)) are Cytoplasmic-facing. The chain crosses the membrane as a helical span at residues 453–473 (VVLYVSLVFILSVVIIKFIIA). Residues 474-891 (CYFRWTVARK…EYYISHHQAK (418 aa)) lie on the Extracellular side of the membrane. A Phosphoserine modification is found at serine 537. Phosphothreonine is present on threonine 538. Residues 892–910 (AFESVFGSVTCLPGCFSMY) traverse the membrane as a helical segment. At 911-1029 (RIKSPKGSDG…SMQFVIGIEL (119 aa)) the chain is on the cytoplasmic side. The chain crosses the membrane as a helical span at residues 1030–1050 (IGTMVLPLAICFTIYVIIFAI). The Extracellular segment spans residues 1051–1055 (VSKPT). Residues 1056–1076 (PVITLVLLAIILGLPGLIVVI) traverse the membrane as a helical segment. The Cytoplasmic portion of the chain corresponds to 1077–1165 (TATRWSYLWW…RKEESDSFVA (89 aa)).

The protein belongs to the chitin synthase family. Class IV subfamily. Homodimer. May form higher order oligomers. Seems to interact with BNI4 and SKT5 which link CHS3 to septins. Glycosylated. Post-translationally, palmitoylated by PFA4; required for proper export from the ER.

The protein resides in the cell membrane. It is found in the bud neck. The protein localises to the cytoplasmic vesicle membrane. The enzyme catalyses [(1-&gt;4)-N-acetyl-beta-D-glucosaminyl](n) + UDP-N-acetyl-alpha-D-glucosamine = [(1-&gt;4)-N-acetyl-beta-D-glucosaminyl](n+1) + UDP + H(+). In terms of biological role, polymerizes chitin, a structural polymer of the cell wall and septum, by transferring the sugar moiety of UDP-GlcNAc to the non-reducing end of the growing chitin polymer. Appears to be responsible for synthesis of the majority of the chitin found in the cell wall periphery. It is involved in the synthesis of the chitin ring that forms in the cell wall just before bud emergence. This ring remains at the base of the bud as the bud grows and ultimately forms part of the bud scar marking the division site on the mother cell. Also catalyzes the synthesis of chitin laid down during mating and spore cell-wall synthesis. The sequence is that of Chitin synthase 3 from Saccharomyces cerevisiae (strain ATCC 204508 / S288c) (Baker's yeast).